Here is a 492-residue protein sequence, read N- to C-terminus: Cytochrome P450 2B12 (492 aa).

Phosphoserine is present on serine 129. Cysteine 437 is a heme binding site.

This sequence belongs to the cytochrome P450 family. The cofactor is heme. In terms of tissue distribution, preputial gland, but not in liver.

Its subcellular location is the endoplasmic reticulum membrane. It is found in the microsome membrane. It carries out the reaction an organic molecule + reduced [NADPH--hemoprotein reductase] + O2 = an alcohol + oxidized [NADPH--hemoprotein reductase] + H2O + H(+). Its function is as follows. Cytochromes P450 are a group of heme-thiolate monooxygenases. In liver microsomes, this enzyme is involved in an NADPH-dependent electron transport pathway. This isozyme seems responsible for metabolism of 2,2',4,4',5,5'-hexachlorobiphenyl. This is Cytochrome P450 2B12 (Cyp2b12) from Rattus norvegicus (Rat).